Consider the following 507-residue polypeptide: Maturase K (507 aa).

It belongs to the intron maturase 2 family. MatK subfamily.

The protein resides in the plastid. Its subcellular location is the chloroplast. Its function is as follows. Usually encoded in the trnK tRNA gene intron. Probably assists in splicing its own and other chloroplast group II introns. In Fagopyrum esculentum (Common buckwheat), this protein is Maturase K.